The following is a 1383-amino-acid chain: DNA-directed RNA polymerase subunit beta (1383 aa).

The protein belongs to the RNA polymerase beta chain family. In terms of assembly, the RNAP catalytic core consists of 2 alpha, 1 beta, 1 beta' and 1 omega subunit. When a sigma factor is associated with the core the holoenzyme is formed, which can initiate transcription.

The catalysed reaction is RNA(n) + a ribonucleoside 5'-triphosphate = RNA(n+1) + diphosphate. Functionally, DNA-dependent RNA polymerase catalyzes the transcription of DNA into RNA using the four ribonucleoside triphosphates as substrates. The polypeptide is DNA-directed RNA polymerase subunit beta (Xanthomonas euvesicatoria pv. vesicatoria (strain 85-10) (Xanthomonas campestris pv. vesicatoria)).